The primary structure comprises 229 residues: Peptidase E (229 aa).

Active-site charge relay system residues include S120, D135, and H157.

It belongs to the peptidase S51 family.

It localises to the cytoplasm. It catalyses the reaction Dipeptidase E catalyzes the hydrolysis of dipeptides Asp-|-Xaa. It does not act on peptides with N-terminal Glu, Asn or Gln, nor does it cleave isoaspartyl peptides.. Hydrolyzes dipeptides containing N-terminal aspartate residues. May play a role in allowing the cell to use peptide aspartate to spare carbon otherwise required for the synthesis of the aspartate family of amino acids. This chain is Peptidase E, found in Shigella sonnei (strain Ss046).